The sequence spans 230 residues: Cytidylate kinase (230 aa).

16–24 contributes to the ATP binding site; it reads GPASAGKST.

Belongs to the cytidylate kinase family. Type 1 subfamily.

The protein resides in the cytoplasm. The enzyme catalyses CMP + ATP = CDP + ADP. It catalyses the reaction dCMP + ATP = dCDP + ADP. The polypeptide is Cytidylate kinase (Lactobacillus johnsonii (strain CNCM I-12250 / La1 / NCC 533)).